Here is a 142-residue protein sequence, read N- to C-terminus: Large ribosomal subunit protein uL13 (142 aa).

Belongs to the universal ribosomal protein uL13 family. As to quaternary structure, part of the 50S ribosomal subunit.

This protein is one of the early assembly proteins of the 50S ribosomal subunit, although it is not seen to bind rRNA by itself. It is important during the early stages of 50S assembly. The sequence is that of Large ribosomal subunit protein uL13 from Yersinia enterocolitica serotype O:8 / biotype 1B (strain NCTC 13174 / 8081).